Reading from the N-terminus, the 373-residue chain is DNA dC-&gt;dU-editing enzyme APOBEC-3F (373 aa).

2 consecutive CMP/dCMP-type deaminase domains span residues 29 to 137 (RRNT…LCRL) and 174 to 321 (DDNY…LRSL). Residue K52 forms a (Microbial infection) Glycyl lysine isopeptide (Lys-Gly) (interchain with G-Cter in ubiquitin) linkage. Zn(2+)-binding residues include H65, C96, and C99. Residue K234 forms a (Microbial infection) Glycyl lysine isopeptide (Lys-Gly) (interchain with G-Cter in ubiquitin) linkage. Residue H249 coordinates Zn(2+). The active-site Proton donor is E251. The Zn(2+) site is built by C280 and C283. A disulfide bond links C280 and C283. Residues K334, K352, K355, and K358 each participate in a (Microbial infection) Glycyl lysine isopeptide (Lys-Gly) (interchain with G-Cter in ubiquitin) cross-link.

It belongs to the cytidine and deoxycytidylate deaminase family. As to quaternary structure, homodimer. Interacts with APOBEC3G in an RNA-dependent manner. Interacts with AGO1, AGO2 and AGO3. In terms of assembly, (Microbial infection) Interacts with HIV-1 Vif, leading to its ubiquitination and degradation by the proteasome. In the absence of Vif protein, specifically packaged into HIV-1 virions. Zn(2+) serves as cofactor. (Microbial infection) Following infection by HIV-1, ubiquitinated by a cullin-5-RING E3 ubiquitin-protein ligase complex (ECS complex) hijacked by the HIV-1 Vif protein, leading to its degradation. As to expression, widely expressed. Highly expressed in ovary.

It localises to the cytoplasm. The protein resides in the P-body. It catalyses the reaction a 2'-deoxycytidine in single-stranded DNA + H2O + H(+) = a 2'-deoxyuridine in single-stranded DNA + NH4(+). Its activity is regulated as follows. (Microbial infection) Antiviral activity is neutralized by the HIV-1 virion infectivity factor (Vif), that prevents its incorporation into progeny virions by both inhibiting its translation and/or by inducing its ubiquitination and subsequent degradation by the 26S proteasome. In terms of biological role, DNA deaminase (cytidine deaminase) which acts as an inhibitor of retrovirus replication and retrotransposon mobility via deaminase-dependent and -independent mechanisms. Exhibits antiviral activity against viruse such as HIV-1 or HIV-2. After the penetration of retroviral nucleocapsids into target cells of infection and the initiation of reverse transcription, it can induce the conversion of cytosine to uracil in the minus-sense single-strand viral DNA, leading to G-to-A hypermutations in the subsequent plus-strand viral DNA. The resultant detrimental levels of mutations in the proviral genome, along with a deamination-independent mechanism that works prior to the proviral integration, together exert efficient antiretroviral effects in infected target cells. Selectively targets single-stranded DNA and does not deaminate double-stranded DNA or single- or double-stranded RNA. Exhibits antiviral activity also against hepatitis B virus (HBV), equine infectious anemia virus (EIAV), xenotropic MuLV-related virus (XMRV) and simian foamy virus (SFV) and may inhibit the mobility of LTR and non-LTR retrotransposons. May also play a role in the epigenetic regulation of gene expression through the process of active DNA demethylation. The chain is DNA dC-&gt;dU-editing enzyme APOBEC-3F from Homo sapiens (Human).